Consider the following 456-residue polypeptide: Short chain dehydrogenase tazN (456 aa).

NADP(+) contacts are provided by Val-45, Asp-99, Asn-126, Arg-160, Tyr-195, Lys-199, and Thr-229. Catalysis depends on Tyr-195, which acts as the Proton donor. Lys-199 serves as the catalytic Lowers pKa of active site Tyr.

Belongs to the short-chain dehydrogenases/reductases (SDR) family.

The protein operates within secondary metabolite biosynthesis. In terms of biological role, short chain dehydrogenase; part of the gene cluster that mediates the biosynthesis of azaterrilone A and other azaphilones, a class of fungal metabolites characterized by a highly oxygenated pyrano-quinone bicyclic core and exhibiting a broad range of bioactivities. The first step of the pathway begins with the non-reducing polyketide synthase tazA that assembles one acetyl-CoA starter unit, five malonyl-CoA units, and catalyzes a series of Claisen condensations, methylation, PT-mediated cyclization, and finally releases the first hexaketide precursor through the R-domain. The tazA product then undergoes reduction on its terminal ketone and the following pyran-ring formation by yet undetermined enzyme(s). Dehydration and enoyl reduction, possibly involving the trans-enoyl reductase tazE leads to the next intermediate. TazD is predicted as an acetyltransferase and might catalyze the acetylation steps leading to the synthesis of azaterrilone A. Azaterrilone A is not the final product of the taz pathway and both the highly reducing polyketide synthase tazB and the dual enzyme tazHJ catalyze late steps of the pathway, leading to the production of the 2 final stereoisomers that contain additional polyketide modification whose structures have still to be determined. In Aspergillus terreus (strain NIH 2624 / FGSC A1156), this protein is Short chain dehydrogenase tazN.